We begin with the raw amino-acid sequence, 478 residues long: Protein nucleotidyltransferase YdiU (478 aa).

ATP-binding residues include G84, G86, R87, K107, D119, G120, R170, and R177. Residue D246 is the Proton acceptor of the active site. Mg(2+) contacts are provided by N247 and D256. D256 serves as a coordination point for ATP.

This sequence belongs to the SELO family. Mg(2+) is required as a cofactor. Mn(2+) serves as cofactor.

It carries out the reaction L-seryl-[protein] + ATP = 3-O-(5'-adenylyl)-L-seryl-[protein] + diphosphate. The catalysed reaction is L-threonyl-[protein] + ATP = 3-O-(5'-adenylyl)-L-threonyl-[protein] + diphosphate. It catalyses the reaction L-tyrosyl-[protein] + ATP = O-(5'-adenylyl)-L-tyrosyl-[protein] + diphosphate. The enzyme catalyses L-histidyl-[protein] + UTP = N(tele)-(5'-uridylyl)-L-histidyl-[protein] + diphosphate. It carries out the reaction L-seryl-[protein] + UTP = O-(5'-uridylyl)-L-seryl-[protein] + diphosphate. The catalysed reaction is L-tyrosyl-[protein] + UTP = O-(5'-uridylyl)-L-tyrosyl-[protein] + diphosphate. Its function is as follows. Nucleotidyltransferase involved in the post-translational modification of proteins. It can catalyze the addition of adenosine monophosphate (AMP) or uridine monophosphate (UMP) to a protein, resulting in modifications known as AMPylation and UMPylation. This chain is Protein nucleotidyltransferase YdiU, found in Escherichia coli (strain K12 / MC4100 / BW2952).